Consider the following 192-residue polypeptide: Molybdenum cofactor guanylyltransferase (192 aa).

GTP contacts are provided by residues 10-12, Lys-23, Asn-51, Asp-69, and Asp-99; that span reads LAG. Mg(2+) is bound at residue Asp-99.

It belongs to the MobA family. In terms of assembly, monomer. It depends on Mg(2+) as a cofactor.

It localises to the cytoplasm. The catalysed reaction is Mo-molybdopterin + GTP + H(+) = Mo-molybdopterin guanine dinucleotide + diphosphate. Functionally, transfers a GMP moiety from GTP to Mo-molybdopterin (Mo-MPT) cofactor (Moco or molybdenum cofactor) to form Mo-molybdopterin guanine dinucleotide (Mo-MGD) cofactor. The protein is Molybdenum cofactor guanylyltransferase of Haemophilus influenzae (strain 86-028NP).